Here is a 345-residue protein sequence, read N- to C-terminus: Meiotically up-regulated gene 97 protein (345 aa).

The next 2 helical transmembrane spans lie at 292-312 and 319-329; these read MWVL…GLWM and FAHGMLLNLGI.

The protein resides in the membrane. In terms of biological role, required for correct meiotic chromosome segregation. Appears to also have role in sporulation. The protein is Meiotically up-regulated gene 97 protein (mug97) of Schizosaccharomyces pombe (strain 972 / ATCC 24843) (Fission yeast).